The primary structure comprises 428 residues: C4-dicarboxylate transport protein (428 aa).

9 helical membrane-spanning segments follow: residues 8–28 (SLYV…HFYP), 44–64 (LIKM…IAGM), 76–96 (VALL…LIIV), 142–162 (IGAF…LFGF), 184–204 (VIFG…FGAM), 222–242 (LIIC…GSIA), 289–309 (VVGL…SIYL), 326–346 (IFHQ…AAGV), and 352–372 (IVLA…LALI).

It belongs to the dicarboxylate/amino acid:cation symporter (DAACS) (TC 2.A.23) family.

It is found in the cell inner membrane. Functionally, responsible for the transport of dicarboxylates such as succinate, fumarate, and malate from the periplasm across the membrane. In Klebsiella pneumoniae subsp. pneumoniae (strain ATCC 700721 / MGH 78578), this protein is C4-dicarboxylate transport protein.